A 66-amino-acid polypeptide reads, in one-letter code: Small ribosomal subunit protein bS21 (66 aa).

It belongs to the bacterial ribosomal protein bS21 family.

The polypeptide is Small ribosomal subunit protein bS21 (Rickettsia typhi (strain ATCC VR-144 / Wilmington)).